Consider the following 355-residue polypeptide: CRAL-TRIO domain-containing protein C365.01 (355 aa).

The region spanning 93-260 is the CRAL-TRIO domain; that stretch reads ENGLNQNFVK…SMHGQFDETK (168 aa).

This Schizosaccharomyces pombe (strain 972 / ATCC 24843) (Fission yeast) protein is CRAL-TRIO domain-containing protein C365.01.